The sequence spans 554 residues: ATP-dependent RNA helicase MRH4, mitochondrial (554 aa).

The N-terminal 54 residues, 1 to 54, are a transit peptide targeting the mitochondrion; sequence MSSVGIASASLWLRGPVKSALKGRWLSCEQMRRYGTKSAPAVRKGGHSKKARQA. Positions 119 to 140 match the Q motif motif; sequence DCGLDDKRVAAFLGQVQPTPIQ. Residues 150-337 form the Helicase ATP-binding domain; the sequence is TLMEPQLQVH…NKLFPNLQVV (188 aa). 163–170 contacts ATP; it reads AETGSGKT. The DEAD box motif lies at 285–288; it reads DEAD. The 187-residue stretch at 368–554 folds into the Helicase C-terminal domain; it reads ALAQALYAIM…PVVKKNRPIQ (187 aa). Residues 439–474 form a disordered region; the sequence is RIQDQVRPSELKKPQERRLPNSNIKVADSKDNGQRS. A compositionally biased stretch (basic and acidic residues) spans 445 to 457; sequence RPSELKKPQERRL.

It belongs to the DEAD box helicase family. MRH4 subfamily.

Its subcellular location is the mitochondrion. It catalyses the reaction ATP + H2O = ADP + phosphate + H(+). Functionally, ATP-binding RNA helicase involved in mitochondrial RNA metabolism. Required for maintenance of mitochondrial DNA. The protein is ATP-dependent RNA helicase MRH4, mitochondrial (MRH4) of Eremothecium gossypii (strain ATCC 10895 / CBS 109.51 / FGSC 9923 / NRRL Y-1056) (Yeast).